The chain runs to 695 residues: MQSVEARYVDLDKIRNIGIMAHIDAGKTTTTERILYYTGRKHFIGDVDEGTATTDWMPQEKERGITIQSAATTCFWKGYRINIIDTPGHVDFTAEVERALRVLDGAIAVFDATAGVEPQSETVWRQADKYNVPRIAFMNKMDKVGADFYMAVETLVTKLRANPIPIQMPIGSEKDFQGVIDLIKMKAIYWTSEDGSVYEEREIPDELKEEAELRREEMLEKVAELDETILEKYLEGEEITEEEIKKVLRKATIENRAVPVLCGAAKMNKGIQPLLDAVIDYLPSPLDLPPVKGWRLSDGEVVYRKPDENEPFTALVFKVQVDPYIGKLVYFRVYSGRLEKGSYVYNSTKGQRERISRIVFMHADKREEVDYVRPGDIAAGVGLKASQTGDTLCDEKEPTVLEKIDFPEPVISLAIEPATKSDEEKLVKALLALSEEDPTLQVKVDKETGETIISGMGELHLEIIVDRLKREFGVNVRVGQPQVAYRETIKKAAEAEGKYIRQTGGRGQYGHVILRIEPIPEEEGKNFEFIDKTVGGVIPKEFMPAIEAGIKEAMMSGPLAGYPVVRIRAIVLDGSYHEVDSSEMAFKIAASLAFKEAMKKAQPVLLEPIMKLEITTPEEYMGNIIADLNSRRAKVEALETRGHLKVIVAKVPLSETFGYATTLRSLSQGRASYIMQFSHYQEVPEKIAEKIIKVV.

A tr-type G domain is found at 12-286 (DKIRNIGIMA…AVIDYLPSPL (275 aa)). GTP is bound by residues 21 to 28 (AHIDAGKT), 85 to 89 (DTPGH), and 139 to 142 (NKMD).

It belongs to the TRAFAC class translation factor GTPase superfamily. Classic translation factor GTPase family. EF-G/EF-2 subfamily.

Its subcellular location is the cytoplasm. In terms of biological role, catalyzes the GTP-dependent ribosomal translocation step during translation elongation. During this step, the ribosome changes from the pre-translocational (PRE) to the post-translocational (POST) state as the newly formed A-site-bound peptidyl-tRNA and P-site-bound deacylated tRNA move to the P and E sites, respectively. Catalyzes the coordinated movement of the two tRNA molecules, the mRNA and conformational changes in the ribosome. The polypeptide is Elongation factor G (Thermotoga neapolitana (strain ATCC 49049 / DSM 4359 / NBRC 107923 / NS-E)).